Here is a 198-residue protein sequence, read N- to C-terminus: Glycerol-3-phosphate acyltransferase (198 aa).

5 consecutive transmembrane segments (helical) span residues 1–21, 52–72, 81–101, 115–135, and 153–173; these read MILI…IPAA, GPAL…VGLA, WTAL…FLGF, LALD…CIWL, and LAAA…LAAL.

Belongs to the PlsY family. In terms of assembly, probably interacts with PlsX.

The protein resides in the cell membrane. The enzyme catalyses an acyl phosphate + sn-glycerol 3-phosphate = a 1-acyl-sn-glycero-3-phosphate + phosphate. The protein operates within lipid metabolism; phospholipid metabolism. Catalyzes the transfer of an acyl group from acyl-phosphate (acyl-PO(4)) to glycerol-3-phosphate (G3P) to form lysophosphatidic acid (LPA). This enzyme utilizes acyl-phosphate as fatty acyl donor, but not acyl-CoA or acyl-ACP. The chain is Glycerol-3-phosphate acyltransferase from Deinococcus geothermalis (strain DSM 11300 / CIP 105573 / AG-3a).